A 362-amino-acid polypeptide reads, in one-letter code: Severin (362 aa).

The Gelsolin-like 1 repeat unit spans residues 53–102 (FKVVPVPESSYGKFYDGDSYIILHTFKEGNSLKHDIHFFLGTFTTQDEAG). 162-170 (RLLHISGDK) lines the a 1,2-diacyl-sn-glycero-3-phospho-(1D-myo-inositol-4,5-bisphosphate) pocket. 2 Gelsolin-like repeats span residues 172-212 (AKVA…QEKN) and 280-323 (LKFS…NEKK).

The protein belongs to the villin/gelsolin family.

Functionally, severin blocks the ends of F-actin and causes the fragmentation and depolymerization of actin filaments in a Ca(2+) dependent manner. The sequence is that of Severin (sevA) from Dictyostelium discoideum (Social amoeba).